Consider the following 536-residue polypeptide: Butyrophilin-like protein 9 (536 aa).

Positions Met1–Ser35 are cleaved as a signal peptide. 2 consecutive Ig-like V-type domains span residues Asp36–Glu149 and Gly152–Val241. Residues Asp36–Lys257 are Extracellular-facing. Cysteines 59 and 133 form a disulfide. N-linked (GlcNAc...) asparagine glycans are attached at residues Asn102, Asn139, and Asn224. Cys173 and Cys227 form a disulfide bridge. The helical transmembrane segment at Ala258–Leu278 threads the bilayer. At Arg279–Ser536 the chain is on the cytoplasmic side. Residues Asp307–Gly506 form the B30.2/SPRY domain.

This sequence belongs to the immunoglobulin superfamily. BTN/MOG family.

The protein resides in the membrane. The sequence is that of Butyrophilin-like protein 9 (Btnl9) from Mus musculus (Mouse).